We begin with the raw amino-acid sequence, 86 residues long: Alpha-mammal toxin Ts3 (86 aa).

Positions M1–G19 are cleaved as a signal peptide. An LCN-type CS-alpha/beta domain is found at K21–K82. Cystine bridges form between C31–C81, C35–C57, C43–C64, and C47–C66. A Serine amide modification is found at S83.

As to expression, expressed by the venom gland.

It localises to the secreted. Functionally, alpha toxins bind voltage-independently at site-3 of sodium channels (Nav) and inhibit the inactivation of the activated channels, thereby blocking neuronal transmission. This synthetic toxin inhibits inactivation of rat Nav1.4/SCN4A (when tested at 201 nM). In addition, it has been shown to cause a persistent sodium channel activation in nitrergic inhibitory fibers innervating the rabbit corpus cavernosum, resulting in NO release and cavernosal smooth muscle relaxation. This toxin is active against mammals. Its function is as follows. this synthetic peptide with a Ser at position 31 (C12S) acts as a bradykinin-potentiating peptide (BPP). Induces endothelium-dependent vasodilation that is reverted by NO synthase inhibitor, suggesting it activates molecular targets on vascular endothelium leading to NO production and vasodilation. It appears to induce vasodilation through muscarinic acetylcholine receptors (AChR) M2 (CHRM2) and M3 (CHRM3). Does not inhibit the angiotensin-converting enzyme (ACE). Does not act via bradykinin B2 receptor. The sequence is that of Alpha-mammal toxin Ts3 from Tityus serrulatus (Brazilian scorpion).